The following is a 206-amino-acid chain: MDYPGNLFVVAAPSGAGKSSLVKALMELDSAIQPAVSHTTRPPRGQEKHGREYFFLSPEEFDSMVQRDAFLEWAHVHGHRYGTSRQAIEERIAHGKDVILEIDFQGAINIKRIFSNAVLIFILPPSWEELRSRLQRRGEDSPEVIELRLKNAATEMAQAREFDFVIINELFERAVFDLKTIVHAQRLKFSAQRRARAETFRALQIP.

The Guanylate kinase-like domain occupies 5 to 183; that stretch reads GNLFVVAAPS…AVFDLKTIVH (179 aa). 12-19 serves as a coordination point for ATP; sequence APSGAGKS.

Belongs to the guanylate kinase family.

It is found in the cytoplasm. The enzyme catalyses GMP + ATP = GDP + ADP. In terms of biological role, essential for recycling GMP and indirectly, cGMP. This Polaromonas sp. (strain JS666 / ATCC BAA-500) protein is Guanylate kinase.